Reading from the N-terminus, the 203-residue chain is Small ribosomal subunit protein uS4 (203 aa).

Residues Thr-22–Ser-45 form a disordered region. Residues Gln-93–Val-156 form the S4 RNA-binding domain.

Belongs to the universal ribosomal protein uS4 family. Part of the 30S ribosomal subunit. Contacts protein S5. The interaction surface between S4 and S5 is involved in control of translational fidelity.

One of the primary rRNA binding proteins, it binds directly to 16S rRNA where it nucleates assembly of the body of the 30S subunit. In terms of biological role, with S5 and S12 plays an important role in translational accuracy. This chain is Small ribosomal subunit protein uS4, found in Enterococcus faecalis (strain ATCC 700802 / V583).